The sequence spans 353 residues: Photosystem II D2 protein (353 aa).

N-acetylthreonine is present on Thr2. Thr2 carries the post-translational modification Phosphothreonine. Residues 41–61 (CAYFAVGGWFTGTTFVTSWYT) traverse the membrane as a helical segment. His118 is a chlorophyll a binding site. A helical transmembrane segment spans residues 125–141 (GFMLRQFELARSVQLRP). Residues Gln130 and Asn143 each contribute to the pheophytin a site. The chain crosses the membrane as a helical span at residues 153–166 (VFVSVFLIYPLGQS). Residue His198 coordinates chlorophyll a. Residues 208–228 (AALLCAIHGATVENTLFEDGD) traverse the membrane as a helical segment. Residues His215 and Phe262 each contribute to the a plastoquinone site. His215 is a Fe cation binding site. His269 contributes to the Fe cation binding site. The chain crosses the membrane as a helical span at residues 279–295 (GLWMSALGVVGLALNLR).

This sequence belongs to the reaction center PufL/M/PsbA/D family. PSII is composed of 1 copy each of membrane proteins PsbA, PsbB, PsbC, PsbD, PsbE, PsbF, PsbH, PsbI, PsbJ, PsbK, PsbL, PsbM, PsbT, PsbX, PsbY, PsbZ, Psb30/Ycf12, at least 3 peripheral proteins of the oxygen-evolving complex and a large number of cofactors. It forms dimeric complexes. It depends on The D1/D2 heterodimer binds P680, chlorophylls that are the primary electron donor of PSII, and subsequent electron acceptors. It shares a non-heme iron and each subunit binds pheophytin, quinone, additional chlorophylls, carotenoids and lipids. There is also a Cl(-1) ion associated with D1 and D2, which is required for oxygen evolution. The PSII complex binds additional chlorophylls, carotenoids and specific lipids. as a cofactor.

Its subcellular location is the plastid. The protein resides in the chloroplast thylakoid membrane. It catalyses the reaction 2 a plastoquinone + 4 hnu + 2 H2O = 2 a plastoquinol + O2. Its function is as follows. Photosystem II (PSII) is a light-driven water:plastoquinone oxidoreductase that uses light energy to abstract electrons from H(2)O, generating O(2) and a proton gradient subsequently used for ATP formation. It consists of a core antenna complex that captures photons, and an electron transfer chain that converts photonic excitation into a charge separation. The D1/D2 (PsbA/PsbD) reaction center heterodimer binds P680, the primary electron donor of PSII as well as several subsequent electron acceptors. D2 is needed for assembly of a stable PSII complex. The polypeptide is Photosystem II D2 protein (Jasminum nudiflorum (Winter jasmine)).